The following is a 239-amino-acid chain: Sugar fermentation stimulation protein homolog (239 aa).

This sequence belongs to the SfsA family.

This is Sugar fermentation stimulation protein homolog from Sinorhizobium medicae (strain WSM419) (Ensifer medicae).